The primary structure comprises 295 residues: MRRLTDSFILGLAKGAVIPGLYTFRMTEGRSPLGQIGVLITVAISFLLTFKRFDPRFYKPIGDFKIVFLSLMAPKLPSLLSAVVMICLIFSEMRLRMILSRCVMIMPSYSPAVFTGIMVSLFFKSQMFDDYSVLITAASLLPITVRYGWMIRSSGFLLGLQKYRPILKSTSFREVDLKCLVKFTVEFLLLFTILWIGKMFLSMPKSNHLFFLTVVNNVFFKLNVFKAAACAVVAILSGLMMNVCLYRIIFEAFVGLGFSSIMLNLSSDLKDRSFYAGDLLNGFFCLVVCCMYFGV.

The next 8 membrane-spanning stretches (helical) occupy residues 31–51, 66–86, 103–123, 131–151, 183–203, 218–238, 243–263, and 274–294; these read SPLGQIGVLITVAISFLLTFK, IVFLSLMAPKLPSLLSAVVMI, VMIMPSYSPAVFTGIMVSLFF, YSVLITAASLLPITVRYGWMI, FTVEFLLLFTILWIGKMFLSM, VFFKLNVFKAAACAVVAILSG, VCLYRIIFEAFVGLGFSSIML, and FYAGDLLNGFFCLVVCCMYFG.

It is found in the membrane. The chain is Protein U26 (U26) from Homo sapiens (Human).